The following is a 624-amino-acid chain: tRNA uridine 5-carboxymethylaminomethyl modification enzyme MnmG (624 aa).

14 to 19 (GAGHAG) provides a ligand contact to FAD. 273 to 287 (GTRYCPSFEDKVVRF) serves as a coordination point for NAD(+).

Belongs to the MnmG family. As to quaternary structure, homodimer. Heterotetramer of two MnmE and two MnmG subunits. FAD is required as a cofactor.

Its subcellular location is the cytoplasm. Functionally, NAD-binding protein involved in the addition of a carboxymethylaminomethyl (cmnm) group at the wobble position (U34) of certain tRNAs, forming tRNA-cmnm(5)s(2)U34. The polypeptide is tRNA uridine 5-carboxymethylaminomethyl modification enzyme MnmG (Syntrophomonas wolfei subsp. wolfei (strain DSM 2245B / Goettingen)).